A 321-amino-acid polypeptide reads, in one-letter code: Biotin synthase (321 aa).

One can recognise a Radical SAM core domain in the interval 44-270 (RGVRIHILNN…DAEVRAAGGR (227 aa)). The [4Fe-4S] cluster site is built by Cys-59, Cys-63, and Cys-66. The [2Fe-2S] cluster site is built by Cys-103, Cys-135, Cys-195, and Arg-265.

Belongs to the radical SAM superfamily. Biotin synthase family. In terms of assembly, homodimer. [4Fe-4S] cluster serves as cofactor. It depends on [2Fe-2S] cluster as a cofactor.

The enzyme catalyses (4R,5S)-dethiobiotin + (sulfur carrier)-SH + 2 reduced [2Fe-2S]-[ferredoxin] + 2 S-adenosyl-L-methionine = (sulfur carrier)-H + biotin + 2 5'-deoxyadenosine + 2 L-methionine + 2 oxidized [2Fe-2S]-[ferredoxin]. It functions in the pathway cofactor biosynthesis; biotin biosynthesis; biotin from 7,8-diaminononanoate: step 2/2. Catalyzes the conversion of dethiobiotin (DTB) to biotin by the insertion of a sulfur atom into dethiobiotin via a radical-based mechanism. The chain is Biotin synthase from Magnetococcus marinus (strain ATCC BAA-1437 / JCM 17883 / MC-1).